The following is a 308-amino-acid chain: Cytochrome b (308 aa).

4 consecutive transmembrane segments (helical) span residues 1–21 (FGLLLGICLIVQIVTGLLLAA), 45–66 (WLIRNLHANGASFFFICIYLHI), 81–101 (WNIGVILLLTLMATAFVGYVL), and 146–166 (FFALHFLLPFVIAGLTLVHLT). Heme b contacts are provided by His51 and His65. His150 and His164 together coordinate heme b. His169 serves as a coordination point for a ubiquinone. 3 helical membrane-spanning segments follow: residues 194-214 (TKDMLGFALMLIPLITLALFS), 256-276 (LGGVLALAASVLVLFLIPLLH), and 288-308 (LSQILFWTLVANLLVLTWVGS).

This sequence belongs to the cytochrome b family. The cytochrome bc1 complex contains 11 subunits: 3 respiratory subunits (MT-CYB, CYC1 and UQCRFS1), 2 core proteins (UQCRC1 and UQCRC2) and 6 low-molecular weight proteins (UQCRH/QCR6, UQCRB/QCR7, UQCRQ/QCR8, UQCR10/QCR9, UQCR11/QCR10 and a cleavage product of UQCRFS1). This cytochrome bc1 complex then forms a dimer. The cofactor is heme b.

The protein localises to the mitochondrion inner membrane. Its function is as follows. Component of the ubiquinol-cytochrome c reductase complex (complex III or cytochrome b-c1 complex) that is part of the mitochondrial respiratory chain. The b-c1 complex mediates electron transfer from ubiquinol to cytochrome c. Contributes to the generation of a proton gradient across the mitochondrial membrane that is then used for ATP synthesis. The protein is Cytochrome b (MT-CYB) of Pomatostomus temporalis (Grey-crowned babbler).